The chain runs to 504 residues: ATP synthase subunit alpha 1 (504 aa).

170 to 177 (GDRQIGKT) is an ATP binding site.

The protein belongs to the ATPase alpha/beta chains family. In terms of assembly, F-type ATPases have 2 components, CF(1) - the catalytic core - and CF(0) - the membrane proton channel. CF(1) has five subunits: alpha(3), beta(3), gamma(1), delta(1), epsilon(1). CF(0) has three main subunits: a(1), b(2) and c(9-12). The alpha and beta chains form an alternating ring which encloses part of the gamma chain. CF(1) is attached to CF(0) by a central stalk formed by the gamma and epsilon chains, while a peripheral stalk is formed by the delta and b chains.

The protein resides in the cell inner membrane. The catalysed reaction is ATP + H2O + 4 H(+)(in) = ADP + phosphate + 5 H(+)(out). Produces ATP from ADP in the presence of a proton gradient across the membrane. The alpha chain is a regulatory subunit. The protein is ATP synthase subunit alpha 1 of Syntrophus aciditrophicus (strain SB).